The following is a 456-amino-acid chain: Ribonuclease inhibitor (456 aa).

Met1 carries the post-translational modification N-acetylmethionine. LRR repeat units lie at residues 15–43 (WTEL…CKDI), 44–71 (SSAV…VGLV), 72–100 (LQGL…CGIL), 101–128 (PGML…LKLL), 129–157 (CEGL…CEPL), 158–185 (ASVL…VRIL), 186–214 (CQGL…CKDL), 215–242 (CDVV…IAAL), 243–271 (CPGL…CKDL), 272–299 (CRVL…ARLL), 300–328 (CESL…CPYF), 329–356 (CSVL…VQEL), 357–385 (CKAL…CSSL), 386–413 (ANVL…VLQL), and 414–442 (LESL…EEQL). Position 86 is a phosphoserine (Ser86).

In terms of assembly, forms high-affinity heterodimers with RNASE1, ANG and RNASE2.

Its subcellular location is the cytoplasm. It localises to the nucleus. Its function is as follows. Ribonuclease inhibitor which inhibits RNASE1, RNASE2 and angiogenin (ANG). May play a role in redox homeostasis. Required to inhibit the cytotoxic tRNA ribonuclease activity of ANG in the cytoplasm in absence of stress. Relocates to the nucleus in response to stress, relieving inhibition of ANG in the cytoplasm, and inhibiting the angiogenic activity of ANG in the nucleus. This Mus musculus (Mouse) protein is Ribonuclease inhibitor (Rnh1).